Consider the following 426-residue polypeptide: Endoglucanase (426 aa).

The first 19 residues, 1–19, serve as a signal peptide directing secretion; sequence MRRCMPLVAASVAALMLAG. Cys20 carries the N-palmitoyl cysteine lipid modification. The S-diacylglycerol cysteine moiety is linked to residue Cys20. The propeptide occupies 20 to 45; that stretch reads CGGGDGDPSLSTASVSATDTTTLKPA. The Proton donor role is filled by Glu249. Glu361 serves as the catalytic Nucleophile.

The protein belongs to the glycosyl hydrolase 5 (cellulase A) family.

Its subcellular location is the cell membrane. It carries out the reaction Endohydrolysis of (1-&gt;4)-beta-D-glucosidic linkages in cellulose, lichenin and cereal beta-D-glucans.. The polypeptide is Endoglucanase (egl) (Ralstonia solanacearum (Pseudomonas solanacearum)).